We begin with the raw amino-acid sequence, 267 residues long: Membrane-spanning 4-domains subfamily A member 12 (267 aa).

The Cytoplasmic portion of the chain corresponds to 1–91; that stretch reads MMSSKPTSHA…MNFKEEAKAL (91 aa). The chain crosses the membrane as a helical span at residues 92–112; the sequence is GVIQIMVGLMHIGFGIVLCLI. Over 113-120 the chain is Extracellular; the sequence is SFSFREVL. The chain crosses the membrane as a helical span at residues 121 to 141; that stretch reads GFASTAVIGGYPFWGGLSFII. Topologically, residues 142–160 are cytoplasmic; the sequence is SGSLSVSASKELSRCLVKG. The chain crosses the membrane as a helical span at residues 161-181; sequence SLGMNIVSSILAFIGVILLLV. Residues 182–200 lie on the Extracellular side of the membrane; that stretch reads DMCINGVAGQDYWAVLSGK. A helical transmembrane segment spans residues 201–221; sequence GISATLMIFSLLEFFVACATA. Over 222 to 267 the chain is Cytoplasmic; that stretch reads HFANQANTTTNMSVLVIPNMYESNPVTPASSSAPPRCNNYSANAPK. Residues 248–267 form a disordered region; it reads TPASSSAPPRCNNYSANAPK.

The protein belongs to the MS4A family.

The protein resides in the membrane. Functionally, may be involved in signal transduction as a component of a multimeric receptor complex. In Homo sapiens (Human), this protein is Membrane-spanning 4-domains subfamily A member 12 (MS4A12).